A 479-amino-acid polypeptide reads, in one-letter code: Acetylcholine receptor subunit alpha-type acr-15 (479 aa).

A signal peptide spans 1–18; the sequence is MLLPILLHFLLLITQLNG. Residues 19–230 are Extracellular-facing; it reads SPAEVRLIND…HLRRRTLYYS (212 aa). Residues Asn-60 and Asn-92 are each glycosylated (N-linked (GlcNAc...) asparagine). Cys-146 and Cys-160 are disulfide-bonded. Asn-200 carries N-linked (GlcNAc...) asparagine glycosylation. Cys-208 and Cys-209 are oxidised to a cystine. A helical membrane pass occupies residues 231–251; sequence FNLIAPVLLTMILVILGFTVS. At 252–257 the chain is on the cytoplasmic side; the sequence is PETCEK. Residues 258–278 traverse the membrane as a helical segment; the sequence is VGLQISVSLAICIFLTIMSEL. Residues 279 to 285 lie on the Extracellular side of the membrane; the sequence is TPQTSEA. The helical transmembrane segment at 286-306 threads the bilayer; the sequence is VPLLGVFFHTCNFISVLATSF. Residues 307–453 are Cytoplasmic-facing; that stretch reads TVYVQSFHFR…WRFAAIVVDR (147 aa). The chain crosses the membrane as a helical span at residues 454–474; the sequence is LCLLAFSLLIVVVSIIIALRA. The Extracellular segment spans residues 475-479; it reads PYLFA.

This sequence belongs to the ligand-gated ion channel (TC 1.A.9) family. Acetylcholine receptor (TC 1.A.9.1) subfamily. In terms of tissue distribution, expressed in interneurons, motor neurons, pharyngeal neurons and muscles.

The protein resides in the cell membrane. It is found in the postsynaptic cell membrane. Functionally, after binding acetylcholine, the AChR responds by an extensive change in conformation that affects all subunits and leads to opening of an ion-conducting channel across the plasma membrane. Activity is required in glutamatergic neurons to mediate nicotine-induced and nicotine-motivated behaviors. This chain is Acetylcholine receptor subunit alpha-type acr-15, found in Caenorhabditis elegans.